Consider the following 823-residue polypeptide: Leucine--tRNA ligase (823 aa).

The short motif at 42–52 (PYPSGTLHMGH) is the 'HIGH' region element. Positions 575 to 579 (KMSKS) match the 'KMSKS' region motif. Lysine 578 is a binding site for ATP.

This sequence belongs to the class-I aminoacyl-tRNA synthetase family.

It is found in the cytoplasm. It carries out the reaction tRNA(Leu) + L-leucine + ATP = L-leucyl-tRNA(Leu) + AMP + diphosphate. In Legionella pneumophila subsp. pneumophila (strain Philadelphia 1 / ATCC 33152 / DSM 7513), this protein is Leucine--tRNA ligase.